The following is a 396-amino-acid chain: Aldo-keto reductase ausK (396 aa).

D76 contacts NADP(+). The active-site Proton donor is the Y81. H156 contacts substrate. NADP(+)-binding positions include 186–187 (CN), Q212, 241–251 (DALGSGKFQSR), and 317–325 (RKIQHLHDN).

The protein belongs to the aldo/keto reductase family. Aldo/keto reductase 2 subfamily. Homodimer.

It functions in the pathway secondary metabolite biosynthesis; terpenoid biosynthesis. Aldo-keto reductase; part of the gene cluster that mediates the biosynthesis of calidodehydroaustin, a fungal meroterpenoid. The first step of the pathway is the synthesis of 3,5-dimethylorsellinic acid by the polyketide synthase ausA. 3,5-dimethylorsellinic acid is then prenylated by the polyprenyl transferase ausN. Further epoxidation by the FAD-dependent monooxygenase ausM and cyclization by the probable terpene cyclase ausL lead to the formation of protoaustinoid A. Protoaustinoid A is then oxidized to spiro-lactone preaustinoid A3 by the combined action of the FAD-binding monooxygenases ausB and ausC, and the dioxygenase ausE. Acid-catalyzed keto-rearrangement and ring contraction of the tetraketide portion of preaustinoid A3 by ausJ lead to the formation of preaustinoid A4. The aldo-keto reductase ausK, with the help of ausH, is involved in the next step by transforming preaustinoid A4 into isoaustinone which is in turn hydroxylated by the P450 monooxygenase ausI to form austinolide. The cytochrome P450 monooxygenase ausG modifies austinolide to austinol. Austinol is further acetylated to austin by the O-acetyltransferase ausP, which spontaneously changes to dehydroaustin. The cytochrome P450 monooxygenase ausR then converts dehydroaustin is into 7-dehydrodehydroaustin. The hydroxylation catalyzed by ausR permits the O-acetyltransferase ausQ to add an additional acetyl group to the molecule, leading to the formation of acetoxydehydroaustin. The short chain dehydrogenase ausT catalyzes the reduction of the double bond present between carbon atoms 1 and 2 to convert 7-dehydrodehydroaustin into 1,2-dihydro-7-hydroxydehydroaustin. AusQ catalyzes not only an acetylation reaction but also the addition of the PKS ausV diketide product to 1,2-dihydro-7-hydroxydehydroaustin, forming precalidodehydroaustin. Finally, the iron/alpha-ketoglutarate-dependent dioxygenase converts precalidodehydroaustin into calidodehydroaustin. The chain is Aldo-keto reductase ausK from Aspergillus calidoustus.